The chain runs to 205 residues: ATP phosphoribosyltransferase (205 aa).

It belongs to the ATP phosphoribosyltransferase family. Short subfamily. In terms of assembly, heteromultimer composed of HisG and HisZ subunits.

It localises to the cytoplasm. It catalyses the reaction 1-(5-phospho-beta-D-ribosyl)-ATP + diphosphate = 5-phospho-alpha-D-ribose 1-diphosphate + ATP. It participates in amino-acid biosynthesis; L-histidine biosynthesis; L-histidine from 5-phospho-alpha-D-ribose 1-diphosphate: step 1/9. Catalyzes the condensation of ATP and 5-phosphoribose 1-diphosphate to form N'-(5'-phosphoribosyl)-ATP (PR-ATP). Has a crucial role in the pathway because the rate of histidine biosynthesis seems to be controlled primarily by regulation of HisG enzymatic activity. The protein is ATP phosphoribosyltransferase of Nitratiruptor sp. (strain SB155-2).